Here is a 473-residue protein sequence, read N- to C-terminus: Cannabinoid receptor 1 (473 aa).

The Extracellular segment spans residues 1-118 (MKSILDGLAD…CFMILNPSQQ (118 aa)). Positions 2 to 23 (KSILDGLADTTFRTITTDLLYV) are required for mitochondrial localization. N-linked (GlcNAc...) asparagine glycans are attached at residues asparagine 79 and asparagine 85. A helical membrane pass occupies residues 119 to 144 (LAIAVLSLTLGTFTVLENLLVLCVIL). The Cytoplasmic segment spans residues 145–156 (HSRSLRCRPSYH). Residues 157–177 (FIGSLAVADLLGSVIFVYSFV) form a helical membrane-spanning segment. Residues 178 to 189 (DFHVFHRKDSPN) are Extracellular-facing. The chain crosses the membrane as a helical span at residues 190–214 (VFLFKLGGVTASFTASVGSLFLTAI). The Cytoplasmic portion of the chain corresponds to 215-234 (DRYISIHRPLAYKRIVTRPK). A helical transmembrane segment spans residues 235 to 257 (AVVAFCVMWTIAIVIAVLPLLGW). Over 258 to 275 (NCKKLNSVCSDIFPLIDE) the chain is Extracellular. The chain crosses the membrane as a helical span at residues 276 to 301 (TYLMFWIGVTSILLLFIVYAYMYILW). At 302–346 (KAHSHAVRMLQRGTQKSIIIQSTEDGKVQITRPDQTRMDIRLAKT) the chain is on the cytoplasmic side. A helical membrane pass occupies residues 347–367 (LVLILVVLIICWGPLLAIMVY). Over 368–379 (DVFGKMNKLIKT) the chain is Extracellular. Residues 380–401 (IFAFCSMLCLLNSTVNPIIYAL) traverse the membrane as a helical segment. The Cytoplasmic segment spans residues 402–473 (RSKDLRHAFR…VSTDTTAEAL (72 aa)). A lipid anchor (S-palmitoyl cysteine) is attached at cysteine 417.

This sequence belongs to the G-protein coupled receptor 1 family. In terms of processing, palmitoylation at Cys-417 is important for recruitment at both plasma membrane and lipid rafts and association with G protein alpha subunits.

It is found in the cell membrane. The protein resides in the mitochondrion outer membrane. It localises to the cell projection. The protein localises to the axon. Its subcellular location is the presynapse. Functionally, G-protein coupled receptor for cannabinoids. Mediates many cannabinoid-induced effects in the central nervous system (CNS), as well as in peripheral tissues. Regulates cellular respiration and energy production in response to cannabinoids. Signaling typically involves reduction in cyclic AMP. The protein is Cannabinoid receptor 1 (CNR1) of Taeniopygia guttata (Zebra finch).